A 115-amino-acid polypeptide reads, in one-letter code: Replication initiation control protein YabA (115 aa).

Zn(2+) contacts are provided by H85, C87, C101, and C104.

It belongs to the YabA family. As to quaternary structure, homotetramer. Interacts with both DnaA and DnaN, acting as a bridge between these two proteins. Zn(2+) is required as a cofactor.

The protein localises to the cytoplasm. The protein resides in the nucleoid. Involved in control of chromosome replication initiation. Inhibits the cooperative binding of DnaA to the oriC region, thus negatively regulating initiation of chromosome replication. Inhibits the ability of DnaA-ATP to form a helix on DNA; does not disassemble preformed DnaA-DNA helices. Decreases the residence time of DnaA on the chromosome at its binding sites (oriC, replication forks and promoter-binding sites). Tethers DnaA to the replication machinery via the DNA polymerase beta sliding clamp subunit (dnaN). Associates with oriC and other DnaA targets on the chromosome in a DnaA-dependent manner. The polypeptide is Replication initiation control protein YabA (Lactiplantibacillus plantarum (strain ATCC BAA-793 / NCIMB 8826 / WCFS1) (Lactobacillus plantarum)).